Reading from the N-terminus, the 327-residue chain is Biotin synthase (327 aa).

The Radical SAM core domain occupies 49–282 (FNKDKIDLCS…NKVIRLCGGR (234 aa)). [4Fe-4S] cluster is bound by residues Cys-67, Cys-71, and Cys-74. [2Fe-2S] cluster is bound by residues Ser-110, Cys-142, Cys-201, and Arg-277.

The protein belongs to the radical SAM superfamily. Biotin synthase family. Homodimer. Requires [4Fe-4S] cluster as cofactor. It depends on [2Fe-2S] cluster as a cofactor.

It carries out the reaction (4R,5S)-dethiobiotin + (sulfur carrier)-SH + 2 reduced [2Fe-2S]-[ferredoxin] + 2 S-adenosyl-L-methionine = (sulfur carrier)-H + biotin + 2 5'-deoxyadenosine + 2 L-methionine + 2 oxidized [2Fe-2S]-[ferredoxin]. It functions in the pathway cofactor biosynthesis; biotin biosynthesis; biotin from 7,8-diaminononanoate: step 2/2. In terms of biological role, catalyzes the conversion of dethiobiotin (DTB) to biotin by the insertion of a sulfur atom into dethiobiotin via a radical-based mechanism. The sequence is that of Biotin synthase from Methanococcus maripaludis (strain C5 / ATCC BAA-1333).